The primary structure comprises 466 residues: UDP-N-acetylmuramoylalanine--D-glutamate ligase (466 aa).

An ATP-binding site is contributed by 121-127 (GTNGKST).

Belongs to the MurCDEF family.

It localises to the cytoplasm. It catalyses the reaction UDP-N-acetyl-alpha-D-muramoyl-L-alanine + D-glutamate + ATP = UDP-N-acetyl-alpha-D-muramoyl-L-alanyl-D-glutamate + ADP + phosphate + H(+). It participates in cell wall biogenesis; peptidoglycan biosynthesis. Functionally, cell wall formation. Catalyzes the addition of glutamate to the nucleotide precursor UDP-N-acetylmuramoyl-L-alanine (UMA). The polypeptide is UDP-N-acetylmuramoylalanine--D-glutamate ligase (Nitrobacter winogradskyi (strain ATCC 25391 / DSM 10237 / CIP 104748 / NCIMB 11846 / Nb-255)).